A 151-amino-acid polypeptide reads, in one-letter code: 3-dehydroquinate dehydratase (151 aa).

Tyr-24 serves as the catalytic Proton acceptor. Substrate contacts are provided by Asn-76, His-82, and Asp-89. His-102 (proton donor) is an active-site residue. Residues 103–104 and Arg-113 contribute to the substrate site; that span reads VS.

The protein belongs to the type-II 3-dehydroquinase family. Homododecamer.

It catalyses the reaction 3-dehydroquinate = 3-dehydroshikimate + H2O. It functions in the pathway metabolic intermediate biosynthesis; chorismate biosynthesis; chorismate from D-erythrose 4-phosphate and phosphoenolpyruvate: step 3/7. Its function is as follows. Catalyzes a trans-dehydration via an enolate intermediate. The sequence is that of 3-dehydroquinate dehydratase from Rhodopseudomonas palustris (strain BisA53).